A 328-amino-acid chain; its full sequence is PLASTID TRANSCRIPTIONALLY ACTIVE protein 6, chloroplastic (328 aa).

Positions 1–14 (MASSAASPSLSLLS) are enriched in low complexity. Residues 1-21 (MASSAASPSLSLLSFTSKPPY) form a disordered region. The transit peptide at 1–59 (MASSAASPSLSLLSFTSKPPYPSGSQRLFASFRTDGLFAPLTLKSRRGRGIVVKVDDVD) directs the protein to the chloroplast. Residues 267–275 (RKRDRKDDL) carry the Nuclear localization signal motif. The RNA binding domain motif lies at 301–319 (EREEWTKTREDMEKHLRKL).

In terms of assembly, subunit of the plastid-encoded RNA polymerase (PEP) complex. Component of a large nuclear subcomplex that may include other PEP subunits (e.g. PTAC12/HMR/PAP5, PTAC14/PAP7 and PTAC7/PAP12). Binds directly to PTAC12/HMR/PAP5 in the nucleus. Interacts with MTERF5. As to expression, mostly expressed in rosette leaves, stems and flowers, and, to a lower extent, in roots and cauline leaves.

It localises to the plastid. Its subcellular location is the chloroplast. The protein localises to the chloroplast thylakoid. It is found in the nucleus. The protein resides in the nucleoplasm. Its function is as follows. Essential protein involved in plastid gene expression and in chloroplast biogenesis. Links photomorphogenesis and chloroplast biogenesis through its dual localization; required for the formation of late photobodies in the nucleus, as well as for phytochrome B-mediated signaling cascade and subsequent reshaping of the plastid-encoded RNA polymerase (PEP) activity. Binds RNA via specific recognition motifs of viral origin. Recruited by MTERF5 to the transcriptionally paused region of psbEFLJ. Promotes leaf greening. This is PLASTID TRANSCRIPTIONALLY ACTIVE protein 6, chloroplastic from Arabidopsis thaliana (Mouse-ear cress).